The sequence spans 193 residues: Thymidylate kinase (193 aa).

7 to 14 (GIDGCGKS) is an ATP binding site.

The protein belongs to the thymidylate kinase family.

The catalysed reaction is dTMP + ATP = dTDP + ADP. Its function is as follows. Phosphorylation of dTMP to form dTDP in both de novo and salvage pathways of dTTP synthesis. The chain is Thymidylate kinase from Coprothermobacter proteolyticus (strain ATCC 35245 / DSM 5265 / OCM 4 / BT).